The following is a 448-amino-acid chain: Probable glycine dehydrogenase (decarboxylating) subunit 1 (448 aa).

Belongs to the GcvP family. N-terminal subunit subfamily. In terms of assembly, the glycine cleavage system is composed of four proteins: P, T, L and H. In this organism, the P 'protein' is a heterodimer of two subunits.

The catalysed reaction is N(6)-[(R)-lipoyl]-L-lysyl-[glycine-cleavage complex H protein] + glycine + H(+) = N(6)-[(R)-S(8)-aminomethyldihydrolipoyl]-L-lysyl-[glycine-cleavage complex H protein] + CO2. In terms of biological role, the glycine cleavage system catalyzes the degradation of glycine. The P protein binds the alpha-amino group of glycine through its pyridoxal phosphate cofactor; CO(2) is released and the remaining methylamine moiety is then transferred to the lipoamide cofactor of the H protein. This chain is Probable glycine dehydrogenase (decarboxylating) subunit 1, found in Staphylococcus aureus (strain Mu3 / ATCC 700698).